A 253-amino-acid chain; its full sequence is Imidazole glycerol phosphate synthase subunit HisF (253 aa).

Active-site residues include Asp-11 and Asp-130.

The protein belongs to the HisA/HisF family. In terms of assembly, heterodimer of HisH and HisF.

It localises to the cytoplasm. The catalysed reaction is 5-[(5-phospho-1-deoxy-D-ribulos-1-ylimino)methylamino]-1-(5-phospho-beta-D-ribosyl)imidazole-4-carboxamide + L-glutamine = D-erythro-1-(imidazol-4-yl)glycerol 3-phosphate + 5-amino-1-(5-phospho-beta-D-ribosyl)imidazole-4-carboxamide + L-glutamate + H(+). It functions in the pathway amino-acid biosynthesis; L-histidine biosynthesis; L-histidine from 5-phospho-alpha-D-ribose 1-diphosphate: step 5/9. Its function is as follows. IGPS catalyzes the conversion of PRFAR and glutamine to IGP, AICAR and glutamate. The HisF subunit catalyzes the cyclization activity that produces IGP and AICAR from PRFAR using the ammonia provided by the HisH subunit. The sequence is that of Imidazole glycerol phosphate synthase subunit HisF from Cereibacter sphaeroides (strain ATCC 17025 / ATH 2.4.3) (Rhodobacter sphaeroides).